The following is a 409-amino-acid chain: Phosphopentomutase (409 aa).

Asp-10, Asp-302, His-307, Asp-343, His-344, and His-355 together coordinate Mn(2+).

It belongs to the phosphopentomutase family. It depends on Mn(2+) as a cofactor.

It is found in the cytoplasm. It carries out the reaction 2-deoxy-alpha-D-ribose 1-phosphate = 2-deoxy-D-ribose 5-phosphate. It catalyses the reaction alpha-D-ribose 1-phosphate = D-ribose 5-phosphate. The protein operates within carbohydrate degradation; 2-deoxy-D-ribose 1-phosphate degradation; D-glyceraldehyde 3-phosphate and acetaldehyde from 2-deoxy-alpha-D-ribose 1-phosphate: step 1/2. In terms of biological role, isomerase that catalyzes the conversion of deoxy-ribose 1-phosphate (dRib-1-P) and ribose 1-phosphate (Rib-1-P) to deoxy-ribose 5-phosphate (dRib-5-P) and ribose 5-phosphate (Rib-5-P), respectively. The protein is Phosphopentomutase of Chelativorans sp. (strain BNC1).